We begin with the raw amino-acid sequence, 526 residues long: Osmo-independent choline transporter BetT1 (526 aa).

Topologically, residues 1-17 are cytoplasmic; it reads MWSKRDEQKTYPPIRLN. A helical transmembrane segment spans residues 18-38; the sequence is PFVFWSSAISISIFGMLFVLF. Topologically, residues 39 to 56 are periplasmic; it reads PETSQHGLTWIQQQVNQL. Residues 57–77 form a helical membrane-spanning segment; sequence FGWYYMLVIILSLGFVAWLAF. Topologically, residues 78-93 are cytoplasmic; it reads SQVGNIPLGKAQDKPE. The chain crosses the membrane as a helical span at residues 94–114; sequence FGYLVWTSMLFSAGIGIALLY. Residues 115–148 are Periplasmic-facing; it reads YGVAEPVDHFLRPPEGQGGTVEAAQNAMMYSFLH. A helical transmembrane segment spans residues 149–169; the sequence is WGIHGWVLYALVGVTLGYFAF. Topologically, residues 170 to 200 are cytoplasmic; sequence RRDLPLALRSALYPIFGERIHGLVGHMVDGF. Residues 201 to 221 traverse the membrane as a helical segment; that stretch reads GILATIISLVTNLGIGALVMI. The Periplasmic segment spans residues 222 to 236; the sequence is SGISYLFPDLPNTSS. Residues 237-257 traverse the membrane as a helical segment; sequence TLVVTVIMMMLVATLTTVIGI. Residues 258-272 lie on the Cytoplasmic side of the membrane; that stretch reads EKGLAWLSRINLRLL. The helical transmembrane segment at 273–293 threads the bilayer; it reads YLLLLFVFLTGPTNHLLNGLV. Topologically, residues 294-323 are periplasmic; that stretch reads QNTGDYLSHFVQKSFDLYLYDKNATGWLAS. A helical membrane pass occupies residues 324 to 344; that stretch reads WTIFYWAWWIAWAPFVGMFIA. The Cytoplasmic portion of the chain corresponds to 345-354; that stretch reads RISKGRTIRE. A helical membrane pass occupies residues 355–375; the sequence is VVLGVCLIPLGFTLAWISIFG. Over 376-417 the chain is Periplasmic; the sequence is NTAIDLILNHGQQIIGSLVIQDPALSLFKLLEYLPFHPYVAG. Residues 418 to 438 traverse the membrane as a helical segment; the sequence is IVVVICFVLFLTPVGSGTLMI. Residues 439-457 lie on the Cytoplasmic side of the membrane; sequence ANLSSQGGSSDSDSPIWLR. Residues 458–478 traverse the membrane as a helical segment; that stretch reads VFWSIAITIVSIGLLLAGSFS. Topologically, residues 479–482 are periplasmic; the sequence is AMQS. A helical membrane pass occupies residues 483 to 503; sequence AVVLCGLPFSVILLLYMFGLA. The Cytoplasmic segment spans residues 504 to 526; the sequence is KALKQETQQPVVESHTTETSGSD.

It belongs to the BCCT transporter (TC 2.A.15) family.

It is found in the cell inner membrane. Sodium-independent high-affinity choline uptake system. Uptake is not proton coupled. May play a role in metabolic adaptation to choline-containing environments. The sequence is that of Osmo-independent choline transporter BetT1 from Acinetobacter baylyi (strain ATCC 33305 / BD413 / ADP1).